Reading from the N-terminus, the 132-residue chain is Nitrogenase iron-iron protein delta chain (132 aa).

Hexamer of two alpha, two beta, and two delta chains. Iron-sulfur cluster is required as a cofactor.

The catalysed reaction is N2 + 8 reduced [2Fe-2S]-[ferredoxin] + 16 ATP + 16 H2O = H2 + 8 oxidized [2Fe-2S]-[ferredoxin] + 2 NH4(+) + 16 ADP + 16 phosphate + 6 H(+). The key enzymatic reactions in nitrogen fixation are catalyzed by the nitrogenase complex, which has 2 components: the iron protein (component 2) and a component 1 which is either a molybdenum-iron protein, a vanadium-iron, or an iron-iron protein. In Azotobacter vinelandii, this protein is Nitrogenase iron-iron protein delta chain (anfG).